The following is a 303-amino-acid chain: Caspase-7 (303 aa).

Residue methionine 1 is modified to N-acetylmethionine. Positions 1-23 are excised as a propeptide; it reads MTDDQDCAAELEKVDSSSEDGVD. The disordered stretch occupies residues 1 to 26; sequence MTDDQDCAAELEKVDSSSEDGVDAKP. Residues 10 to 26 are compositionally biased toward basic and acidic residues; sequence ELEKVDSSSEDGVDAKP. Serine 30 carries the phosphoserine modification. The tract at residues 38 to 41 is exosite; that stretch reads KKKR. The segment at 76-87 is loop L1; the sequence is KNFDKATGMDVR. Histidine 144 is a catalytic residue. At threonine 173 the chain carries Phosphothreonine. Cysteine 186 is a catalytic residue. Positions 187–196 are loop L2; it reads RGTELDDGIQ. Positions 199–206 are excised as a propeptide; sequence SGPINDID. Residues 226 to 238 form a loop L3 region; the sequence is VPGYYSWRNPGKG. Position 239 is a phosphoserine (serine 239). A loop L4 region spans residues 274–288; the sequence is ESQSDDPRFNEKKQI.

This sequence belongs to the peptidase C14A family. In terms of assembly, heterotetramer that consists of two anti-parallel arranged heterodimers, each one formed by a 20 kDa (p20) and a 11 kDa (p11) subunit. Interacts with XIAP (via its second BIR domain); inhibiting CASP7 activity. Interacts with BIRC6/bruce. Interacts with ATXN3 (short isoform 1). Interacts with HSPA5. Cleavage by different proteases, such as granzyme B (GZMB), caspase-1 (CASP1), caspase-8 (CASP8) or caspase-9 (CASP9) generate the two active subunits. Its involvement in different programmed cell death processes is probably specified by the protease that activates CASP7. Cleaved and activated by initiator caspases (CASP8 and/or CASP9), leading to execution phase of apoptosis. Cleavage and maturation by GZMB regulates granzyme-mediated programmed cell death. Cleaved and activated by CASP1 in response to bacterial infection. Propeptide domains can also be cleaved efficiently by CASP3. Active heterodimers between the small subunit of caspase-7 and the large subunit of CASP3, and vice versa, also occur. Also cleaved at the N-terminus at alternative sites by CAPN1, leading to its activation. Post-translationally, phosphorylation at Ser-30 and Ser-239 by PAK2 inhibits its activity. Phosphorylation at Ser-30 prevents cleavage and activation by initiator caspase CASP9, while phosphorylation at Ser-239 prevents thiol protease activity by preventing substrate-binding. In terms of processing, ubiquitinated by BIRC6; this activity is inhibited by DIABLO/SMAC. Highly expressed in heart, lung, liver and kidney. Low levels in spleen, skeletal muscle and testis. No expression in the brain.

It localises to the cytoplasm. It is found in the cytosol. Its subcellular location is the nucleus. The protein localises to the secreted. The protein resides in the extracellular space. The catalysed reaction is Strict requirement for an Asp residue at position P1 and has a preferred cleavage sequence of Asp-Glu-Val-Asp-|-.. During activation, the N-terminal disordered prodomain is removed by cleavage. Concomitantly, double cleavage gives rise to a large Caspase-7 subunit p20 and a small Caspase-7 subunit p11. The two large and two small subunits then assemble to form the active CASP7 complex. Can be cleaved and activated by different caspases, depending on the context. Cleaved and activated by initiator caspases (CASP8 and/or CASP9), leading to execution phase of apoptosis. Cleavage and maturation by GZMB regulates granzyme-mediated programmed cell death. Cleavage and maturation by CASP1 regulates pyroptosis. Inhibited by XIAP, which directly binds to the active site pocket and obstructs substrate entry. Phosphorylation at Ser-30 and Ser-239 by PAK2 inhibits its activity. Inhibited by BIRC6; following inhibition of BIRC6-caspase binding by DIABLO/SMAC, BIRC6 is subjected to caspase cleavage, leading to an increase in active caspases. Its function is as follows. Thiol protease involved in different programmed cell death processes, such as apoptosis, pyroptosis or granzyme-mediated programmed cell death, by proteolytically cleaving target proteins. Has a marked preference for Asp-Glu-Val-Asp (DEVD) consensus sequences, with some plasticity for alternate non-canonical sequences. Its involvement in the different programmed cell death processes is probably determined by upstream proteases that activate CASP7. Acts as an effector caspase involved in the execution phase of apoptosis: following cleavage and activation by initiator caspases (CASP8 and/or CASP9), mediates execution of apoptosis by catalyzing cleavage of proteins, such as CLSPN, PARP1, PTGES3 and YY1. Compared to CASP3, acts as a minor executioner caspase and cleaves a limited set of target proteins. Acts as a key regulator of the inflammatory response in response to bacterial infection by catalyzing cleavage and activation of the sphingomyelin phosphodiesterase SMPD1 in the extracellular milieu, thereby promoting membrane repair. Regulates pyroptosis in intestinal epithelial cells: cleaved and activated by CASP1 in response to S.typhimurium infection, promoting its secretion to the extracellular milieu, where it catalyzes activation of SMPD1, generating ceramides that repair membranes and counteract the action of gasdermin-D (GSDMD) pores. Regulates granzyme-mediated programmed cell death in hepatocytes: cleaved and activated by granzyme B (GZMB) in response to bacterial infection, promoting its secretion to the extracellular milieu, where it catalyzes activation of SMPD1, generating ceramides that repair membranes and counteract the action of perforin (PRF1) pores. Following cleavage by CASP1 in response to inflammasome activation, catalyzes processing and inactivation of PARP1, alleviating the transcription repressor activity of PARP1. Acts as an inhibitor of type I interferon production during virus-induced apoptosis by mediating cleavage of antiviral proteins CGAS, IRF3 and MAVS, thereby preventing cytokine overproduction. Cleaves and activates sterol regulatory element binding proteins (SREBPs). Cleaves phospholipid scramblase proteins XKR4, XKR8 and XKR9. Cleaves BIRC6 following inhibition of BIRC6-caspase binding by DIABLO/SMAC. This Mus musculus (Mouse) protein is Caspase-7.